A 380-amino-acid chain; its full sequence is Probable transposase for insertion sequence element IS701 (380 aa).

Involved in the transposition of the insertion sequence. This Microchaete diplosiphon (Fremyella diplosiphon) protein is Probable transposase for insertion sequence element IS701.